The following is a 258-amino-acid chain: MQENLKNDKLKIGKYEFDSRFILGSGKYSLELIKSAIEEAKAQIITLALRRANTGEIANILDYIPKNITLLPNTSGARNADEALRIARLSRELGCGELIKIEVISDSRYLLPDNYETIKACELLAKEGFTPLPYMHADLYAARAMRDAGAAAIMPLAAPIGSNKGLCAKEFIQILLNEIDLPIIVDAGIGSPSQACEAMQMGVSAVMVNTAIAEAKDIALMARAFSLAVNAGRVAFLAGVASVSEAKASSPLTGFLRD.

Lys100 functions as the Schiff-base intermediate with DXP in the catalytic mechanism. 1-deoxy-D-xylulose 5-phosphate-binding positions include Gly161, 187–188 (AG), and 209–210 (NT).

Belongs to the ThiG family. In terms of assembly, homotetramer. Forms heterodimers with either ThiH or ThiS.

The protein resides in the cytoplasm. It catalyses the reaction [ThiS sulfur-carrier protein]-C-terminal-Gly-aminoethanethioate + 2-iminoacetate + 1-deoxy-D-xylulose 5-phosphate = [ThiS sulfur-carrier protein]-C-terminal Gly-Gly + 2-[(2R,5Z)-2-carboxy-4-methylthiazol-5(2H)-ylidene]ethyl phosphate + 2 H2O + H(+). It functions in the pathway cofactor biosynthesis; thiamine diphosphate biosynthesis. In terms of biological role, catalyzes the rearrangement of 1-deoxy-D-xylulose 5-phosphate (DXP) to produce the thiazole phosphate moiety of thiamine. Sulfur is provided by the thiocarboxylate moiety of the carrier protein ThiS. In vitro, sulfur can be provided by H(2)S. This chain is Thiazole synthase, found in Campylobacter jejuni subsp. jejuni serotype O:2 (strain ATCC 700819 / NCTC 11168).